Consider the following 189-residue polypeptide: Segregation and condensation protein B (189 aa).

It belongs to the ScpB family. In terms of assembly, homodimer. Homodimerization may be required to stabilize the binding of ScpA to the Smc head domains. Component of a cohesin-like complex composed of ScpA, ScpB and the Smc homodimer, in which ScpA and ScpB bind to the head domain of Smc. The presence of the three proteins is required for the association of the complex with DNA.

Its subcellular location is the cytoplasm. Its function is as follows. Participates in chromosomal partition during cell division. May act via the formation of a condensin-like complex containing Smc and ScpA that pull DNA away from mid-cell into both cell halves. The sequence is that of Segregation and condensation protein B from Streptococcus mitis.